A 209-amino-acid chain; its full sequence is Large ribosomal subunit protein uL3 (209 aa).

Residues 122-152 (AIKRHGQSRGPMSHGSRYHRRPGSMGPVDPN) are disordered.

The protein belongs to the universal ribosomal protein uL3 family. As to quaternary structure, part of the 50S ribosomal subunit. Forms a cluster with proteins L14 and L19. Interacts with RNA helicase CshA.

Its function is as follows. One of the primary rRNA binding proteins, it binds directly near the 3'-end of the 23S rRNA, where it nucleates assembly of the 50S subunit. Strongly stimulates 23S rRNA precursor processing by mini-ribonuclease 3 (MrnC); 20-30% DMSO can replace L3, suggesting the protein may alter rRNA conformation. The polypeptide is Large ribosomal subunit protein uL3 (Bacillus subtilis (strain 168)).